The chain runs to 103 residues: MAKKSLIQREKKRQKLEQKYHLIRQSLKKKIRSKVSPLSLSEKTKMREKLQSLPRNSAPTRLHRRCFLTGRPRANYRHFGLSGHVLREMVYECLLPGATRSSW.

The segment at 34 to 56 (KVSPLSLSEKTKMREKLQSLPRN) is disordered.

This sequence belongs to the universal ribosomal protein uS14 family. In terms of assembly, part of the 30S ribosomal subunit.

It is found in the plastid. The protein resides in the chloroplast. Functionally, binds 16S rRNA, required for the assembly of 30S particles. The protein is Small ribosomal subunit protein uS14c of Triticum aestivum (Wheat).